A 187-amino-acid chain; its full sequence is MYDASDLRKGLKFEIDGDPFVIVDFQFKKPGKGQALYKCKLRNMISGAQFERTFRSGDKFNEASLEEHDMEYLYSEGGNFCFMNSVSFEQEFLGKDQVGDAVNLLKDNTVCTVLFFNGKAIGLTLPNFVNLRIVQSDPWAKGDTATGSTKPATLETGYEIQVPPFVDEGQLVKIDTRTCEYVERVNE.

Belongs to the elongation factor P family.

The protein resides in the cytoplasm. It participates in protein biosynthesis; polypeptide chain elongation. Its function is as follows. Involved in peptide bond synthesis. Stimulates efficient translation and peptide-bond synthesis on native or reconstituted 70S ribosomes in vitro. Probably functions indirectly by altering the affinity of the ribosome for aminoacyl-tRNA, thus increasing their reactivity as acceptors for peptidyl transferase. This is Elongation factor P from Desulforapulum autotrophicum (strain ATCC 43914 / DSM 3382 / VKM B-1955 / HRM2) (Desulfobacterium autotrophicum).